A 617-amino-acid chain; its full sequence is MTGPEQEMVSSVAATTPAPIAPVVLPKTSESENLLKIRHSMSHVMAMAVQKLFPKAQVTIGPWTEAGFYYDFDNPEPFTEADLKAIKKEMGKIIGRKLPLERIEVSREEAERRIKAQNEPYKLEILERLVEPITLYTLGEQWWDLCAGPHVANTSELNPKAFELESVAGAYWRGDETKAQLQRIYGTAWETADQLSEHKRRKEEALRRDHRRLGKDLDLFSIEDEAGAGLVFWHPRGARMRLLIEDFWRQAHFEGGYELLYTPHVADISLWKTSGHLDFYAESMFGPMEVDERQYQLKPMNCPFHVLTYASKLRSYRELPIRWAELGTVYRYERPGVMHGLMRVRGFTQDDAHVFCLPEQISDEILRILNLTERILSTFDFSNYEINLSTKPDKAIGDDAVWELATKGLIEALKRKGWAYKIDEGGGAFYGPKIDLKIEDAIGRMWQCSTIQLDFNLPERFELDYIAADGSKQRPIMIHRAIFGSLERFFGIMTENYAGDFPFWLAPEQIRLLPVTDEVLGYAEEFQNQLKAAGIRASIDRSGDRLGKLIRIGEKMKIPVLAVIGAKEAEQGAASLRSRRDGDLGVITKERLIATAQSANQDRKASLSFDNSVSVEE.

The tract at residues 209-502 (DHRRLGKDLD…MTENYAGDFP (294 aa)) is catalytic. 3 residues coordinate Zn(2+): cysteine 302, histidine 353, and histidine 479.

It belongs to the class-II aminoacyl-tRNA synthetase family. Homodimer. Requires Zn(2+) as cofactor.

It is found in the cytoplasm. It catalyses the reaction tRNA(Thr) + L-threonine + ATP = L-threonyl-tRNA(Thr) + AMP + diphosphate + H(+). Catalyzes the attachment of threonine to tRNA(Thr) in a two-step reaction: L-threonine is first activated by ATP to form Thr-AMP and then transferred to the acceptor end of tRNA(Thr). Also edits incorrectly charged L-seryl-tRNA(Thr). In Synechococcus sp. (strain CC9311), this protein is Threonine--tRNA ligase.